Consider the following 283-residue polypeptide: Coiled-coil domain-containing protein 42 homolog (283 aa).

Coiled-coil stretches lie at residues 31–139 (ATQL…LQRY) and 174–204 (QDLRSRDRNNQTEIERVRREMARYKEAHRVS).

This sequence belongs to the CFAP73 family.

This Monosiga brevicollis (Choanoflagellate) protein is Coiled-coil domain-containing protein 42 homolog.